We begin with the raw amino-acid sequence, 268 residues long: Phosphonates import ATP-binding protein PhnC (268 aa).

The ABC transporter domain maps to 11–254 (LHAEAVTKRF…EVMAIYQRAE (244 aa)). 43 to 50 (GLSGSGKS) serves as a coordination point for ATP.

Belongs to the ABC transporter superfamily. Phosphonates importer (TC 3.A.1.9.1) family. As to quaternary structure, the complex is composed of two ATP-binding proteins (PhnC), two transmembrane proteins (PhnE) and a solute-binding protein (PhnD).

Its subcellular location is the cell membrane. It carries out the reaction phosphonate(out) + ATP + H2O = phosphonate(in) + ADP + phosphate + H(+). Its function is as follows. Part of the ABC transporter complex PhnCDE involved in phosphonates import. Responsible for energy coupling to the transport system. This Nocardia farcinica (strain IFM 10152) protein is Phosphonates import ATP-binding protein PhnC.